The chain runs to 434 residues: RHOMBOID-like protein 9, chloroplastic (434 aa).

The transit peptide at 1-68 (MALFPLHHEV…SPRRRLCLVR (68 aa)) directs the protein to the chloroplast. The next 8 membrane-spanning stretches (helical) occupy residues 182 to 202 (FYAV…EAAA), 209 to 229 (MGLL…ILAG), 238 to 258 (MFLH…LTFG), 267 to 287 (LFTF…MSFL), 289 to 309 (TADP…AWLV), 326 to 346 (LFQK…FGPI), 352 to 372 (LGAL…LQLG), and 399 to 419 (FLLF…IGDG).

It belongs to the peptidase S54 family.

It is found in the plastid. The protein localises to the chloroplast membrane. In terms of biological role, probable rhomboid-type serine protease that catalyzes intramembrane proteolysis. The polypeptide is RHOMBOID-like protein 9, chloroplastic (Arabidopsis thaliana (Mouse-ear cress)).